The primary structure comprises 204 residues: Large ribosomal subunit protein eL15 (204 aa).

This sequence belongs to the eukaryotic ribosomal protein eL15 family. Component of the large ribosomal subunit.

The protein resides in the cytoplasm. In terms of biological role, component of the large ribosomal subunit. The ribosome is a large ribonucleoprotein complex responsible for the synthesis of proteins in the cell. This is Large ribosomal subunit protein eL15 (rpl15) from Silurus asotus (Amur catfish).